A 263-amino-acid polypeptide reads, in one-letter code: Acetylglutamate kinase (263 aa).

Residues 48-49 (GG), Arg-70, and Asn-162 each bind substrate.

The protein belongs to the acetylglutamate kinase family. ArgB subfamily.

Its subcellular location is the cytoplasm. The enzyme catalyses N-acetyl-L-glutamate + ATP = N-acetyl-L-glutamyl 5-phosphate + ADP. It functions in the pathway amino-acid biosynthesis; L-arginine biosynthesis; N(2)-acetyl-L-ornithine from L-glutamate: step 2/4. Catalyzes the ATP-dependent phosphorylation of N-acetyl-L-glutamate. The sequence is that of Acetylglutamate kinase from Vibrio vulnificus (strain CMCP6).